Reading from the N-terminus, the 210-residue chain is CASP-like protein 3A2 (210 aa).

At 1–45 the chain is on the cytoplasmic side; sequence MMMNGQKMAAAEVAVQLPESKMVTENIGGAAAAMRPFGRKAEVMN. A helical membrane pass occupies residues 46-66; the sequence is VLLRVLCMVTSVAALSSMVTA. Residues 67–92 are Extracellular-facing; it reads QQSSTVSIYGFMLPIQSKWSFSHSFE. A helical transmembrane segment spans residues 93-113; the sequence is YVVGVSAVVAAHSLLQLLISV. The Cytoplasmic portion of the chain corresponds to 114–128; the sequence is SRLLRKSPVIQSRSH. Residues 129-149 form a helical membrane-spanning segment; sequence AWLVFAGDQVFAYAMISAGAA. Residues 150–178 lie on the Extracellular side of the membrane; that stretch reads ASGVTNLNRTGIRHTALPNFCKPLQSFCD. N-linked (GlcNAc...) asparagine glycosylation occurs at N157. Residues 179-199 form a helical membrane-spanning segment; sequence HVAVSIFFTFLSCFLLAASAV. Residues 200–210 lie on the Cytoplasmic side of the membrane; the sequence is QEVIWLSRSKY.

The protein belongs to the Casparian strip membrane proteins (CASP) family. As to quaternary structure, homodimer and heterodimers.

The protein localises to the cell membrane. The protein is CASP-like protein 3A2 of Populus trichocarpa (Western balsam poplar).